Reading from the N-terminus, the 1603-residue chain is DNA polymerase theta (1603 aa).

The region spanning E38–A208 is the Helicase ATP-binding domain. ATP is bound at residue A51 to S58. The DEAH box signature appears at D149–H152. The Helicase C-terminal domain occupies T283–E434.

It belongs to the DNA polymerase type-A family.

Its subcellular location is the nucleus. It carries out the reaction DNA(n) + a 2'-deoxyribonucleoside 5'-triphosphate = DNA(n+1) + diphosphate. DNA polymerase that promotes microhomology-mediated end-joining (MMEJ), an alternative non-homologous end-joining (NHEJ) machinery triggered in response to double-strand breaks in DNA. MMEJ is an error-prone repair pathway that produces deletions of sequences from the strand being repaired and promotes genomic rearrangements, such as telomere fusions. Required to prevent extensive loss of sequences near G-quadruplex (G4) DNA sites, which are prone to cause genome alterations, by generating deletions. In Caenorhabditis elegans, this protein is DNA polymerase theta.